Reading from the N-terminus, the 524-residue chain is G1/S-specific cyclin-E (524 aa).

A disordered region spans residues 1–155 (MAGRKSSRTA…EESHEMVRLE (155 aa)). Positions 18–47 (KPERKSAILSPHDELRERLLETAIDMKENI) are enriched in basic and acidic residues. Positions 48–62 (PQRNTRNSSVGSQKS) are enriched in polar residues. Composition is skewed to basic and acidic residues over residues 63–78 (DCSETRKRRSTKEGPA), 86–95 (KHRNGSREDS), and 146–155 (EESHEMVRLE).

This sequence belongs to the cyclin family. Cyclin E subfamily. In terms of assembly, interacts with a member of the CDK2/CDK protein kinases to form a serine/threonine kinase holoenzyme complex. The cyclin subunit imparts substrate specificity to the complex. In terms of tissue distribution, expressed dynamically in proliferating cells throughout development. Detectable in larval blast cells undergoing active proliferation that give rise to all tissue types, including germline, intestine, hypodermis, neurons, and muscle.

It is found in the nucleus. The protein resides in the cytoplasm. Its subcellular location is the cytoskeleton. It localises to the microtubule organizing center. The protein localises to the centrosome. It is found in the centriole. Essential for the control of the cell cycle at the G1/S (start) transition. In association with cdk-2, regulates proliferation, quiescent state and cell fate during the development of several cell lineages. In the embryo, initiates the establishment of cell polarity through the recruitment of the centrosomal proteins spd-2 and spd-5 during prophase. During the development of the vulva, controls the onset of vulval cell terminal differentiation by controlling the duration of G1 phase. During hypoderm development at early larval stages, controls syncytial fate of seam cell daughter cells. Involved in the progression of cell division in the intestinal lineage in larvae, and in particular in endoreplication, a specific growth pathway in the intestinal epithelium, required for feeding and gut development in growing larvae. By controlling the activity of translational repressor gld-1, regulates the pool of germline stem cells and the size of the mitotic zone by preventing entry into meiosis. In addition, repression of expression by gld-1 prevents mitosis re-entry in meiotic germline cells. The chain is G1/S-specific cyclin-E from Caenorhabditis elegans.